The primary structure comprises 311 residues: Heme A synthase (311 aa).

Residues 1–6 (MQRFIK) are Cytoplasmic-facing. Residues 7-27 (WLAVITSLDLLIVLLGGALVT) traverse the membrane as a helical segment. The Extracellular portion of the chain corresponds to 28 to 62 (KTGSGQGCGKSWPLCNGEFVPSNLSMETIIELSHR). A disulfide bond links cysteine 35 and cysteine 42. Residue glutamate 58 is part of the active site. Residue histidine 61 coordinates heme o. Residues 63-83 (LTSGSAGILVTLLCILSWKYY) traverse the membrane as a helical segment. At 84–91 (KHVRETKT) the chain is on the cytoplasmic side. A helical membrane pass occupies residues 92–112 (LAILSFVFLVAQALMGAAAVV). The Extracellular portion of the chain corresponds to 113-121 (WGQMPAVLA). A helical transmembrane segment spans residues 122–142 (IHFGISLISFASVILLTCLIF). Heme o is bound at residue histidine 123. Residues 143-159 (EIDQKFDARSLIMDKKM) lie on the Cytoplasmic side of the membrane. The helical transmembrane segment at 160-180 (KFHIYGVTIYSYIVVYTGALV) threads the bilayer. At 181 to 211 (RHERASLACPDFPLCSKNRPMPTQLHEWVQM) the chain is on the extracellular side. Cysteine 189 and cysteine 195 are oxidised to a cystine. Residues 212 to 232 (GHRVAAMLIFAWILYAMILAI) traverse the membrane as a helical segment. Histidine 213 is a heme b binding site. Over 233 to 243 (RHYKQQPVVYW) the chain is Cytoplasmic. Residues 244–264 (GWIISFILVTLQAIVGILVVF) traverse the membrane as a helical segment. Residues 265–271 (TNASLSM) lie on the Extracellular side of the membrane. A helical transmembrane segment spans residues 272-292 (ALLHSLFISCLFAVLCYLVML). Histidine 275 provides a ligand contact to heme b. The Cytoplasmic portion of the chain corresponds to 293–311 (GTRSKVNAKEAASTSKQTK).

The protein belongs to the COX15/CtaA family. Type 1 subfamily. In terms of assembly, interacts with CtaB. Requires heme b as cofactor.

Its subcellular location is the cell membrane. It carries out the reaction Fe(II)-heme o + 2 A + H2O = Fe(II)-heme a + 2 AH2. Its pathway is porphyrin-containing compound metabolism; heme A biosynthesis; heme A from heme O: step 1/1. In terms of biological role, catalyzes the conversion of heme O to heme A by two successive hydroxylations of the methyl group at C8. The first hydroxylation forms heme I, the second hydroxylation results in an unstable dihydroxymethyl group, which spontaneously dehydrates, resulting in the formyl group of heme A. This chain is Heme A synthase, found in Bacillus cereus (strain ATCC 10987 / NRS 248).